Consider the following 365-residue polypeptide: Mannose-1-phosphate guanylyltransferase catalytic subunit beta (365 aa).

The substrate-binding domain stretch occupies residues 2–221 (KALILVGGYG…PGFWMDVGQP (220 aa)). Residue Asp109 coordinates GDP-alpha-D-mannose. Mg(2+) is bound at residue Asp109. Lys161 is an active-site residue. Asp217 lines the GDP-alpha-D-mannose pocket. Residue Asp217 participates in Mg(2+) binding. A hexapeptide repeat domain region spans residues 244–365 (ETGSNIHPTA…VNVPSKDIIM (122 aa)).

It belongs to the transferase hexapeptide repeat family. As to quaternary structure, component of the GMPPA-GMPPB mannose-1-phosphate guanylyltransferase complex composed of 4 GMPPA subunits and 8 tag-335/GMPPB subunits; the complex is organized into three layers, a central layer made up of 2 GMPPA dimers sandwiched between two layers each made up of 2 tag-335/GMPPB dimers. Catalytic activity of tag-335/GMPPB is reduced when part of the complex and binding of GDP-alpha-D-Mannose by GMPPA induces allosteric feedback inhibition of tag-335/GMPPB. It depends on Mg(2+) as a cofactor.

It catalyses the reaction alpha-D-mannose 1-phosphate + GTP + H(+) = GDP-alpha-D-mannose + diphosphate. Its pathway is nucleotide-sugar biosynthesis; GDP-alpha-D-mannose biosynthesis; GDP-alpha-D-mannose from alpha-D-mannose 1-phosphate (GTP route): step 1/1. With respect to regulation, enzyme activity is reduced by incorporation into the GMPPA-GMPPB mannose-1-phosphate guanylyltransferase complex. Allosterically inhibited, when part of the GMPPA-GMPPB complex, by GDP-alpha-D-mannose binding to GMPPA. Catalytic subunit of the GMPPA-GMPPB mannose-1-phosphate guanylyltransferase complex. Catalyzes the formation of GDP-mannose, an essential precursor of glycan moieties of glycoproteins and glycolipids. Can catalyze the reverse reaction in vitro. Together with GMPPA regulates GDP-alpha-D-mannose levels. The polypeptide is Mannose-1-phosphate guanylyltransferase catalytic subunit beta (tag-335) (Caenorhabditis elegans).